A 156-amino-acid chain; its full sequence is MVDTPYRKMLAAKIHRATVTGADVNYEGSLTVPPELLVAAKIHPYESLHVWNVTRGTRLETYAIEGLPNSNDVCANGAAAHLIRPGDHVILAAYAMVPEADAATHKPRLIFVDDNNQLSHVGPEIAGPNLRSDSDDTHLVRSTEMTPDGQPLAEGC.

Ser29 functions as the Schiff-base intermediate with substrate; via pyruvic acid in the catalytic mechanism. Ser29 is subject to Pyruvic acid (Ser). Thr61 serves as a coordination point for substrate. Tyr62 (proton donor) is an active-site residue. 77-79 (GAA) lines the substrate pocket.

The protein belongs to the PanD family. In terms of assembly, heterooctamer of four alpha and four beta subunits. The cofactor is pyruvate. Is synthesized initially as an inactive proenzyme, which is activated by self-cleavage at a specific serine bond to produce a beta-subunit with a hydroxyl group at its C-terminus and an alpha-subunit with a pyruvoyl group at its N-terminus.

The protein resides in the cytoplasm. The catalysed reaction is L-aspartate + H(+) = beta-alanine + CO2. It participates in cofactor biosynthesis; (R)-pantothenate biosynthesis; beta-alanine from L-aspartate: step 1/1. Functionally, catalyzes the pyruvoyl-dependent decarboxylation of aspartate to produce beta-alanine. The sequence is that of Aspartate 1-decarboxylase from Rhodopirellula baltica (strain DSM 10527 / NCIMB 13988 / SH1).